Reading from the N-terminus, the 206-residue chain is uncharacterized protein (206 aa).

The N-terminal stretch at Met-1–Ala-18 is a signal peptide.

This is an uncharacterized protein from Haemophilus influenzae (strain ATCC 51907 / DSM 11121 / KW20 / Rd).